Consider the following 277-residue polypeptide: Putative ankyrin repeat protein L81 (277 aa).

ANK repeat units lie at residues 150-179 (FGQTPMWIATTRCNYRNYVFLKKHGSDLHQ) and 183-215 (QGRSLLHATANAVNSECLDIFKDLIANGVDLYQ).

The chain is Putative ankyrin repeat protein L81 from Acanthamoeba polyphaga (Amoeba).